We begin with the raw amino-acid sequence, 317 residues long: MKKALLLLNMGGANSLDDVEIFLTNMFNDPYILGIKNKFLRKFVAFMITKGRLKTAKHNYEQIGGKSPLCELTAKLCEKISSLKSEFDAVDFAMNYTSPFVKDVLKKYEKFDEIVLLPLYPHHSQTTITSSLADFKKAKEELKLKAKISLCEPFYDDDTYNKIIISHIREAIKDTDISDVSLIFSAHSLPRKIIEKGDIYEKHINEHVQILSKMLKEQGLNFKDVSLAYQSRLGPVKWLEPSLNEALAKCENKKALIYPLSFCIDNSETIFELVIEYAKLAKELSFSFYKVVECPNFSDEFASFILEKSKNAREFSL.

The Fe cation site is built by H187 and E268.

It belongs to the ferrochelatase family.

The protein localises to the cytoplasm. The enzyme catalyses heme b + 2 H(+) = protoporphyrin IX + Fe(2+). Its pathway is porphyrin-containing compound metabolism; protoheme biosynthesis; protoheme from protoporphyrin-IX: step 1/1. Its function is as follows. Catalyzes the ferrous insertion into protoporphyrin IX. This Campylobacter concisus (strain 13826) protein is Ferrochelatase.